Reading from the N-terminus, the 266-residue chain is Amylovoran biosynthesis glycosyltransferase AmsE (266 aa).

Belongs to the glycosyltransferase 2 family.

The protein operates within glycan metabolism; exopolysaccharide biosynthesis. In terms of biological role, involved in the biosynthesis of amylovoran which functions as a virulence factor. The polypeptide is Amylovoran biosynthesis glycosyltransferase AmsE (amsE) (Erwinia amylovora (Fire blight bacteria)).